The primary structure comprises 408 residues: Succinylornithine transaminase (408 aa).

K252 carries the N6-(pyridoxal phosphate)lysine modification.

It belongs to the class-III pyridoxal-phosphate-dependent aminotransferase family. AstC subfamily. The cofactor is pyridoxal 5'-phosphate.

The enzyme catalyses N(2)-succinyl-L-ornithine + 2-oxoglutarate = N-succinyl-L-glutamate 5-semialdehyde + L-glutamate. Its pathway is amino-acid degradation; L-arginine degradation via AST pathway; L-glutamate and succinate from L-arginine: step 3/5. Its function is as follows. Catalyzes the transamination of N(2)-succinylornithine and alpha-ketoglutarate into N(2)-succinylglutamate semialdehyde and glutamate. Can also act as an acetylornithine aminotransferase. This chain is Succinylornithine transaminase, found in Salmonella typhimurium (strain LT2 / SGSC1412 / ATCC 700720).